Reading from the N-terminus, the 317-residue chain is 8-oxo-(d)GTP phosphatase (317 aa).

In terms of domain architecture, Nudix hydrolase spans 15–148 (RIVYAAGAVL…DRKVLCRFAK (134 aa)). Residues 43–46 (RPRY), Asp48, and 53–55 (KGK) each bind substrate. Mg(2+) is bound by residues Lys53, Glu69, and Glu73. The Nudix box signature appears at 54-75 (GKVDPGETAPVGAVREILEETG). Residues Tyr89, Lys99, Glu118, and Tyr136 each coordinate substrate. Glu118 contributes to the Mg(2+) binding site.

It belongs to the Nudix hydrolase family. It depends on Mg(2+) as a cofactor.

The enzyme catalyses 8-oxo-dGTP + H2O = 8-oxo-dGDP + phosphate + H(+). The catalysed reaction is 8-oxo-GTP + H2O = 8-oxo-GDP + phosphate + H(+). Functionally, catalyzes the conversion of 8-oxo-dGTP to 8-oxo-dGDP, and 8-oxo-GTP to 8-oxo-GDP. In Mycobacterium tuberculosis (strain CDC 1551 / Oshkosh), this protein is 8-oxo-(d)GTP phosphatase.